We begin with the raw amino-acid sequence, 112 residues long: MKEKKAQLYEGAYVFSVTLSEEARRKALEKVTSGITNYGGEILKIHDQGRKKLAYTIRGAREGYYYLIYFTVVPGVIAELWKEYHLNEDLLRFLTLKADAVKEVLEFASLPE.

The protein belongs to the bacterial ribosomal protein bS6 family.

In terms of biological role, binds together with bS18 to 16S ribosomal RNA. The sequence is that of Small ribosomal subunit protein bS6 from Chlamydia caviae (strain ATCC VR-813 / DSM 19441 / 03DC25 / GPIC) (Chlamydophila caviae).